Reading from the N-terminus, the 352-residue chain is Protein RecA (352 aa).

65-72 (GPESSGKT) contributes to the ATP binding site. Residues 333–352 (VKAAANREPVEEVEEADTDI) are disordered. Residues 343–352 (EEVEEADTDI) are compositionally biased toward acidic residues.

The protein belongs to the RecA family.

It is found in the cytoplasm. Functionally, can catalyze the hydrolysis of ATP in the presence of single-stranded DNA, the ATP-dependent uptake of single-stranded DNA by duplex DNA, and the ATP-dependent hybridization of homologous single-stranded DNAs. It interacts with LexA causing its activation and leading to its autocatalytic cleavage. The polypeptide is Protein RecA (Pseudomonas fluorescens).